Here is a 453-residue protein sequence, read N- to C-terminus: Chromosomal replication initiator protein DnaA (453 aa).

The interval 1 to 71 (MSEKEIWEKV…QAILFDVVGY (71 aa)) is domain I, interacts with DnaA modulators. The segment at 71 to 114 (YEVKPHFITTEELANYSNNETATPKETTKPSTETTEDNHVLGRE) is domain II. Residues 115 to 331 (QFNAHNTFDT…GALTRLLAYS (217 aa)) form a domain III, AAA+ region region. The ATP site is built by glycine 159, glycine 161, lysine 162, and threonine 163. The tract at residues 332-453 (QLLGKPITTE…ENLEKEIRNV (122 aa)) is domain IV, binds dsDNA.

This sequence belongs to the DnaA family. Oligomerizes as a right-handed, spiral filament on DNA at oriC.

It is found in the cytoplasm. Functionally, plays an essential role in the initiation and regulation of chromosomal replication. ATP-DnaA binds to the origin of replication (oriC) to initiate formation of the DNA replication initiation complex once per cell cycle. Binds the DnaA box (a 9 base pair repeat at the origin) and separates the double-stranded (ds)DNA. Forms a right-handed helical filament on oriC DNA; dsDNA binds to the exterior of the filament while single-stranded (ss)DNA is stabiized in the filament's interior. The ATP-DnaA-oriC complex binds and stabilizes one strand of the AT-rich DNA unwinding element (DUE), permitting loading of DNA polymerase. After initiation quickly degrades to an ADP-DnaA complex that is not apt for DNA replication. Binds acidic phospholipids. This is Chromosomal replication initiator protein DnaA from Staphylococcus aureus (strain bovine RF122 / ET3-1).